The sequence spans 288 residues: Ribosomal RNA small subunit methyltransferase A (288 aa).

Over residues methionine 1–serine 14 the composition is skewed to polar residues. Residues methionine 1–arginine 21 are disordered. The S-adenosyl-L-methionine site is built by asparagine 29, leucine 31, glycine 56, glutamate 77, aspartate 102, and asparagine 122.

Belongs to the class I-like SAM-binding methyltransferase superfamily. rRNA adenine N(6)-methyltransferase family. RsmA subfamily.

The protein resides in the cytoplasm. It carries out the reaction adenosine(1518)/adenosine(1519) in 16S rRNA + 4 S-adenosyl-L-methionine = N(6)-dimethyladenosine(1518)/N(6)-dimethyladenosine(1519) in 16S rRNA + 4 S-adenosyl-L-homocysteine + 4 H(+). Specifically dimethylates two adjacent adenosines (A1518 and A1519) in the loop of a conserved hairpin near the 3'-end of 16S rRNA in the 30S particle. May play a critical role in biogenesis of 30S subunits. This is Ribosomal RNA small subunit methyltransferase A from Idiomarina loihiensis (strain ATCC BAA-735 / DSM 15497 / L2-TR).